The chain runs to 1179 residues: DNA-directed RNA polymerase subunit beta' (1179 aa).

Zn(2+)-binding residues include Cys-60, Cys-62, Cys-75, and Cys-78. Mg(2+)-binding residues include Asp-450, Asp-452, and Asp-454. The Zn(2+) site is built by Cys-791, Cys-865, Cys-872, and Cys-875.

Belongs to the RNA polymerase beta' chain family. As to quaternary structure, the RNAP catalytic core consists of 2 alpha, 1 beta, 1 beta' and 1 omega subunit. When a sigma factor is associated with the core the holoenzyme is formed, which can initiate transcription. It depends on Mg(2+) as a cofactor. Zn(2+) is required as a cofactor.

The enzyme catalyses RNA(n) + a ribonucleoside 5'-triphosphate = RNA(n+1) + diphosphate. In terms of biological role, DNA-dependent RNA polymerase catalyzes the transcription of DNA into RNA using the four ribonucleoside triphosphates as substrates. This Alkaliphilus oremlandii (strain OhILAs) (Clostridium oremlandii (strain OhILAs)) protein is DNA-directed RNA polymerase subunit beta'.